Here is a 208-residue protein sequence, read N- to C-terminus: Probable GTP-binding protein EngB (208 aa).

In terms of domain architecture, EngB-type G spans leucine 23–threonine 205. Residues glycine 31–serine 38, glycine 57–leucine 61, aspartate 84–glycine 87, threonine 154–aspartate 157, and phenylalanine 182–alanine 184 each bind GTP. Serine 38 and threonine 59 together coordinate Mg(2+).

The protein belongs to the TRAFAC class TrmE-Era-EngA-EngB-Septin-like GTPase superfamily. EngB GTPase family. The cofactor is Mg(2+).

In terms of biological role, necessary for normal cell division and for the maintenance of normal septation. This Helicobacter acinonychis (strain Sheeba) protein is Probable GTP-binding protein EngB.